Consider the following 964-residue polypeptide: Isoleucine--tRNA ligase (964 aa).

The 'HIGH' region signature appears at 66 to 76 (PYANGDIHIGH). Glu-596 is a binding site for L-isoleucyl-5'-AMP. The short motif at 637–641 (KMSKS) is the 'KMSKS' region element. An ATP-binding site is contributed by Lys-640. Residues Cys-927, Cys-930, Cys-947, and Cys-950 each coordinate Zn(2+).

Belongs to the class-I aminoacyl-tRNA synthetase family. IleS type 1 subfamily. Monomer. Requires Zn(2+) as cofactor.

The protein localises to the cytoplasm. It catalyses the reaction tRNA(Ile) + L-isoleucine + ATP = L-isoleucyl-tRNA(Ile) + AMP + diphosphate. Its function is as follows. Catalyzes the attachment of isoleucine to tRNA(Ile). As IleRS can inadvertently accommodate and process structurally similar amino acids such as valine, to avoid such errors it has two additional distinct tRNA(Ile)-dependent editing activities. One activity is designated as 'pretransfer' editing and involves the hydrolysis of activated Val-AMP. The other activity is designated 'posttransfer' editing and involves deacylation of mischarged Val-tRNA(Ile). The protein is Isoleucine--tRNA ligase of Cupriavidus necator (strain ATCC 17699 / DSM 428 / KCTC 22496 / NCIMB 10442 / H16 / Stanier 337) (Ralstonia eutropha).